A 185-amino-acid polypeptide reads, in one-letter code: Hypoxanthine/guanine phosphoribosyltransferase (185 aa).

Belongs to the purine/pyrimidine phosphoribosyltransferase family. Archaeal HPRT subfamily. Homodimer.

Its subcellular location is the cytoplasm. It carries out the reaction IMP + diphosphate = hypoxanthine + 5-phospho-alpha-D-ribose 1-diphosphate. The enzyme catalyses GMP + diphosphate = guanine + 5-phospho-alpha-D-ribose 1-diphosphate. The protein operates within purine metabolism; IMP biosynthesis via salvage pathway; IMP from hypoxanthine: step 1/1. In terms of biological role, catalyzes a salvage reaction resulting in the formation of IMP that is energically less costly than de novo synthesis. This Methanococcus maripaludis (strain C6 / ATCC BAA-1332) protein is Hypoxanthine/guanine phosphoribosyltransferase.